The sequence spans 121 residues: Large ribosomal subunit protein bL19 (121 aa).

This sequence belongs to the bacterial ribosomal protein bL19 family.

Functionally, this protein is located at the 30S-50S ribosomal subunit interface and may play a role in the structure and function of the aminoacyl-tRNA binding site. This is Large ribosomal subunit protein bL19 from Chlamydia trachomatis serovar L2 (strain ATCC VR-902B / DSM 19102 / 434/Bu).